A 478-amino-acid chain; its full sequence is MARKTLRARRFFSLIFPFFFITSVYAEQTPESAKTVTVEAKNETFAPQHPDQYQSWKATSEQSAREDALAEDPRLVILWAGYPFSRDYNKPRGHAYAVTDVRETLRTGAPKTAEDGPLPMACWSCKSPDVARLIQQEGEDGYFHGKWARGGPEIVNDLGCADCHNTASDDFAQGKPALTLSRPYAERAMEAIGKPFDKAGRFDQQSMVCGQCHVEYYFDGKNKAVKFPWDEGMKVENMEQYYDAIAFSDWTNSLSKTPMLKAQHPEYETWSAGIHGKNNVTCIDCHMPKVQNAEGKLYTDHKIGNPFDNFAQTCANCHTQDKASLQKVVAERKQAIHDLKIKVEDQLVHAHFEAKAAWDAGATDAEMKPILNDIRHAQWRWDLAIASHGIHMHAPEEGLRMLGSAMDKAADARTKLARLLATKGITHEIPLPDISTKEKAQKAIGLNMQQINAEKQDFLKTVVPQWEDQARKNGLLSQ.

An N-terminal signal peptide occupies residues 1–26 (MARKTLRARRFFSLIFPFFFITSVYA). Heme c is bound at residue His-94. 3 residues coordinate heme: Cys-122, Cys-125, and Lys-126. Heme c contacts are provided by Cys-160, Cys-163, His-164, Cys-209, Cys-212, and His-213. Positions 215, 216, 261, and 263 each coordinate Ca(2+). Substrate is bound at residue Tyr-216. His-264 contributes to the substrate binding site. Heme c is bound by residues His-275, Cys-282, Cys-285, His-286, His-301, Cys-314, Cys-317, His-318, and His-393.

The protein belongs to the cytochrome c-552 family. Ca(2+) is required as a cofactor. Requires heme c as cofactor.

Its subcellular location is the periplasm. It carries out the reaction 6 Fe(III)-[cytochrome c] + NH4(+) + 2 H2O = 6 Fe(II)-[cytochrome c] + nitrite + 8 H(+). It participates in nitrogen metabolism; nitrate reduction (assimilation). Functionally, catalyzes the reduction of nitrite to ammonia, consuming six electrons in the process. The protein is Cytochrome c-552 of Salmonella dublin (strain CT_02021853).